Consider the following 264-residue polypeptide: Gap junction beta-1 protein (264 aa).

The Cytoplasmic portion of the chain corresponds to 1–22 (MNWAGLYAILSGVNRHSTSIGR). The chain crosses the membrane as a helical span at residues 23–45 (IWLSVVFIFRIMVLVAAAESVWG). The Extracellular portion of the chain corresponds to 46–75 (DEKSAFTCNTQQPGCNSVCYDHFFPISHIR). The helical transmembrane segment at 76–98 (LWALQLIIVSTPALLVAMHVAHL) threads the bilayer. Residues 99–130 (QHQEKKELRLSRHVKDQELAEVKKHKVKISGT) lie on the Cytoplasmic side of the membrane. The chain crosses the membrane as a helical span at residues 131 to 153 (LWWTYISSVFFRIIFEAAFMYIF). Residues 154-191 (YLIYPGYSMIRLLKCDAYPCPNTVDCFVSRPTEKTIFT) lie on the Extracellular side of the membrane. Residues 192 to 214 (VFMLVASGVCIVLNVAEVFFLIA) form a helical membrane-spanning segment. Over 215–264 (QACTRRARRHRDSGSISKEHQQNEMNLLITGGSIIKRSAGQEKGDHCSTS) the chain is Cytoplasmic.

Belongs to the connexin family. Beta-type (group I) subfamily. A connexon is composed of a hexamer of connexins. In terms of tissue distribution, lung, liver, intestines, stomach and kidney.

It localises to the cell membrane. It is found in the cell junction. Its subcellular location is the gap junction. Its function is as follows. One gap junction consists of a cluster of closely packed pairs of transmembrane channels, the connexons, through which materials of low MW diffuse from one cell to a neighboring cell. The sequence is that of Gap junction beta-1 protein (gjb1) from Xenopus laevis (African clawed frog).